We begin with the raw amino-acid sequence, 304 residues long: Protein pxr1 (304 aa).

Basic residues predominate over residues 1–11 (MGLAAPRKKTK). Disordered regions lie at residues 1–25 (MGLA…SRST), 144–238 (NATA…DTET), and 256–276 (TSLL…MGRR). The segment covering 15–25 (DPNNTSWSRST) has biased composition (polar residues). Residues 25–79 (TDGFGHRILKAQGWTPGDFLGARNATHSDLFTTASASHIRVVLKDDTLGLGARPK) enclose the G-patch domain. Composition is skewed to basic and acidic residues over residues 154–170 (LRVD…HENG) and 204–238 (GKEM…DTET). Positions 256–266 (TSLLASNGPST) are enriched in polar residues.

Belongs to the PINX1 family.

The protein localises to the nucleus. Its subcellular location is the nucleolus. Functionally, involved in rRNA-processing at A0, A1 and A2 sites and negatively regulates telomerase. This is Protein pxr1 (pxr1) from Aspergillus fumigatus (strain ATCC MYA-4609 / CBS 101355 / FGSC A1100 / Af293) (Neosartorya fumigata).